Here is a 477-residue protein sequence, read N- to C-terminus: Probable ribonuclease FAU-1 (477 aa).

It belongs to the FAU-1 family.

Functionally, probable RNase involved in rRNA stability through maturation and/or degradation of precursor rRNAs. Binds to RNA in loop regions with AU-rich sequences. The sequence is that of Probable ribonuclease FAU-1 from Staphylothermus marinus (strain ATCC 43588 / DSM 3639 / JCM 9404 / F1).